Consider the following 607-residue polypeptide: Elongation factor 4 (607 aa).

The tr-type G domain occupies 11–193 (ENIRNFSIIA…KIVEVVPAPD (183 aa)). GTP contacts are provided by residues 23-28 (DHGKST) and 140-143 (NKID).

The protein belongs to the TRAFAC class translation factor GTPase superfamily. Classic translation factor GTPase family. LepA subfamily.

The protein resides in the cell membrane. The catalysed reaction is GTP + H2O = GDP + phosphate + H(+). Required for accurate and efficient protein synthesis under certain stress conditions. May act as a fidelity factor of the translation reaction, by catalyzing a one-codon backward translocation of tRNAs on improperly translocated ribosomes. Back-translocation proceeds from a post-translocation (POST) complex to a pre-translocation (PRE) complex, thus giving elongation factor G a second chance to translocate the tRNAs correctly. Binds to ribosomes in a GTP-dependent manner. The sequence is that of Elongation factor 4 from Staphylococcus aureus (strain USA300).